Consider the following 316-residue polypeptide: Ribosomal RNA large subunit methyltransferase F (316 aa).

This sequence belongs to the methyltransferase superfamily. METTL16/RlmF family.

The protein localises to the cytoplasm. It carries out the reaction adenosine(1618) in 23S rRNA + S-adenosyl-L-methionine = N(6)-methyladenosine(1618) in 23S rRNA + S-adenosyl-L-homocysteine + H(+). Functionally, specifically methylates the adenine in position 1618 of 23S rRNA. The sequence is that of Ribosomal RNA large subunit methyltransferase F from Pseudomonas putida (strain GB-1).